Consider the following 218-residue polypeptide: Uracil-DNA glycosylase (218 aa).

Catalysis depends on Asp60, which acts as the Proton acceptor.

This sequence belongs to the uracil-DNA glycosylase (UDG) superfamily. UNG family.

The protein localises to the cytoplasm. It catalyses the reaction Hydrolyzes single-stranded DNA or mismatched double-stranded DNA and polynucleotides, releasing free uracil.. In terms of biological role, excises uracil residues from the DNA which can arise as a result of misincorporation of dUMP residues by DNA polymerase or due to deamination of cytosine. This is Uracil-DNA glycosylase from Shewanella oneidensis (strain ATCC 700550 / JCM 31522 / CIP 106686 / LMG 19005 / NCIMB 14063 / MR-1).